Consider the following 260-residue polypeptide: Small ribosomal subunit protein uS2 (260 aa).

It belongs to the universal ribosomal protein uS2 family.

The polypeptide is Small ribosomal subunit protein uS2 (Gluconacetobacter diazotrophicus (strain ATCC 49037 / DSM 5601 / CCUG 37298 / CIP 103539 / LMG 7603 / PAl5)).